The chain runs to 139 residues: Hydrogenase maturation factor HypA (139 aa).

Residues Met-1 and His-2 each coordinate Ni(2+). The Zn(2+) site is built by Cys-73 and Cys-76. His-98 contacts Ni(2+). Zn(2+)-binding residues include Cys-110 and Cys-113.

This sequence belongs to the HypA/HybF family. Monomer and homodimer. Could also form hexamers. Forms a complex with HypB.

Involved in the maturation of [NiFe] hydrogenases. Required for nickel insertion into the metal center of the hydrogenase. The sequence is that of Hydrogenase maturation factor HypA from Thermococcus kodakarensis (strain ATCC BAA-918 / JCM 12380 / KOD1) (Pyrococcus kodakaraensis (strain KOD1)).